We begin with the raw amino-acid sequence, 418 residues long: F-box/LRR-repeat protein 14 (418 aa).

Residues 2-48 (ETHISCLFPELLAMIFGYLDVRDKGRAAQVCTAWRDAAYHKSVWRGV) enclose the F-box domain. The required for down-regulation of SNAI1 stretch occupies residues 2–48 (ETHISCLFPELLAMIFGYLDVRDKGRAAQVCTAWRDAAYHKSVWRGV). LRR repeat units follow at residues 144 to 163 (GLEVLELGGCSNITNTGLLL), 170 to 191 (RLKSLNLRSCRHLSDVGIGHLA), 203 to 225 (GLEQLTLQDCQKLTDLSLKHISR), 229 to 250 (GLRLLNLSFCGGISDAGLLHLS), and 254 to 275 (SLRSLNLRSCDNISDTGIMHLA).

Part of a SCF (SKP1-cullin-F-box) ubiquitin-protein ligase complex. Interacts with SKP1 and CUL1. Interacts with SNAI1; the interaction requires the phosphorylation of the two serine residues in the substrate destruction motif D-S-G-X(2,3,4)-S.

The protein localises to the cytoplasm. Substrate-recognition component of some SCF (SKP1-CUL1-F-box protein)-type E3 ubiquitin-protein ligase complexes. The SCF(FBXL14) complex acts by mediating ubiquitination and subsequent degradation of SNAI1. This is F-box/LRR-repeat protein 14 (FBXL14) from Homo sapiens (Human).